The chain runs to 465 residues: UDP-N-acetylglucosamine 1-carboxyvinyltransferase (465 aa).

Residue 22–23 coordinates phosphoenolpyruvate; that stretch reads KN. Residue Arg94 coordinates UDP-N-acetyl-alpha-D-glucosamine. Catalysis depends on Cys119, which acts as the Proton donor. Cys119 carries the post-translational modification 2-(S-cysteinyl)pyruvic acid O-phosphothioketal. UDP-N-acetyl-alpha-D-glucosamine contacts are provided by Asp313 and Val335.

It belongs to the EPSP synthase family. MurA subfamily.

The protein localises to the cytoplasm. The enzyme catalyses phosphoenolpyruvate + UDP-N-acetyl-alpha-D-glucosamine = UDP-N-acetyl-3-O-(1-carboxyvinyl)-alpha-D-glucosamine + phosphate. The protein operates within cell wall biogenesis; peptidoglycan biosynthesis. Functionally, cell wall formation. Adds enolpyruvyl to UDP-N-acetylglucosamine. The protein is UDP-N-acetylglucosamine 1-carboxyvinyltransferase of Protochlamydia amoebophila (strain UWE25).